Here is a 363-residue protein sequence, read N- to C-terminus: UDP-N-acetylglucosamine--N-acetylmuramyl-(pentapeptide) pyrophosphoryl-undecaprenol N-acetylglucosamine transferase (363 aa).

UDP-N-acetyl-alpha-D-glucosamine-binding positions include 10–12 (TGG), asparagine 124, serine 195, isoleucine 250, and glutamine 295.

It belongs to the glycosyltransferase 28 family. MurG subfamily.

The protein resides in the cell membrane. The enzyme catalyses di-trans,octa-cis-undecaprenyl diphospho-N-acetyl-alpha-D-muramoyl-L-alanyl-D-glutamyl-meso-2,6-diaminopimeloyl-D-alanyl-D-alanine + UDP-N-acetyl-alpha-D-glucosamine = di-trans,octa-cis-undecaprenyl diphospho-[N-acetyl-alpha-D-glucosaminyl-(1-&gt;4)]-N-acetyl-alpha-D-muramoyl-L-alanyl-D-glutamyl-meso-2,6-diaminopimeloyl-D-alanyl-D-alanine + UDP + H(+). The protein operates within cell wall biogenesis; peptidoglycan biosynthesis. In terms of biological role, cell wall formation. Catalyzes the transfer of a GlcNAc subunit on undecaprenyl-pyrophosphoryl-MurNAc-pentapeptide (lipid intermediate I) to form undecaprenyl-pyrophosphoryl-MurNAc-(pentapeptide)GlcNAc (lipid intermediate II). The polypeptide is UDP-N-acetylglucosamine--N-acetylmuramyl-(pentapeptide) pyrophosphoryl-undecaprenol N-acetylglucosamine transferase (Listeria monocytogenes serovar 1/2a (strain ATCC BAA-679 / EGD-e)).